The following is a 443-amino-acid chain: uncharacterized protein (443 aa).

Residues 1–21 (MQSVTPPPTQQGKPDPTNSDM) are disordered. Over residues 10 to 20 (QQGKPDPTNSD) the composition is skewed to polar residues.

This is an uncharacterized protein from Caenorhabditis elegans.